Reading from the N-terminus, the 166-residue chain is Lithostathine-1-alpha (166 aa).

An N-terminal signal peptide occupies residues 1–22; that stretch reads MAQTSSYFMLISCLMFLSQSQG. The residue at position 23 (Gln23) is a Pyrrolidone carboxylic acid. An O-linked (GalNAc) threonine glycan is attached at Thr27. In terms of domain architecture, C-type lectin spans 34 to 164; sequence ISCPEGTNAY…EDKFSFVCKF (131 aa). Intrachain disulfides connect Cys36-Cys47, Cys64-Cys162, and Cys137-Cys154.

The composition of the O-linked carbohydrate on Thr-27 is complex and varied. In the crystallographic structure, the attached sugar appears to be N-acetylglucosamine, typical of an intracellular protein, rather than N-acetylgalactosamine. In terms of tissue distribution, in pancreatic acinar cells and, in lower levels, in brain. Enhanced expression of PSP-related transcripts and intraneuronal accumulation of PSP-like proteins is found in brain from Alzheimer disease and Down syndrome patients.

Its subcellular location is the secreted. In terms of biological role, might act as an inhibitor of spontaneous calcium carbonate precipitation. May be associated with neuronal sprouting in brain, and with brain and pancreas regeneration. The protein is Lithostathine-1-alpha (REG1A) of Homo sapiens (Human).